We begin with the raw amino-acid sequence, 162 residues long: Large ribosomal subunit protein uL15 (162 aa).

Positions 1–13 (MNLNELRDNEGSR) are enriched in basic and acidic residues. Residues 1–39 (MNLNELRDNEGSRYRKKRLGRGIGSGKGKTSGRGVKGQK) form a disordered region. The span at 21–35 (RGIGSGKGKTSGRGV) shows a compositional bias: gly residues.

It belongs to the universal ribosomal protein uL15 family. As to quaternary structure, part of the 50S ribosomal subunit.

Its function is as follows. Binds to the 23S rRNA. The sequence is that of Large ribosomal subunit protein uL15 from Gluconobacter oxydans (strain 621H) (Gluconobacter suboxydans).